Consider the following 269-residue polypeptide: UPF0739 protein C1orf74 (269 aa).

The protein belongs to the UPF0739 family.

This Homo sapiens (Human) protein is UPF0739 protein C1orf74 (C1orf74).